The primary structure comprises 125 residues: Cu-Zn superoxide dismutase-like protein (125 aa).

Residues Cys-52 and Cys-102 are joined by a disulfide bond.

The protein belongs to the Cu-Zn superoxide dismutase family.

The protein resides in the host cytoplasm. In terms of biological role, virion protein with no enzymatic activity. The protein is Cu-Zn superoxide dismutase-like protein of Mus musculus (Mouse).